The chain runs to 660 residues: MTAIPVKKKVQVSFVIRDEKEPMHRSGVNCLQYDAQTGRLFSGGSDTIIRIWKSPDRKDDSGSSYSVGGKTRVRRDLHLQSMEHHTDWVNDIVLCCGVISASSDTTVKVWNAQKGFCMSTLRTHRDYVRALAYARDVEMVASGGFDQLIYLWDIATLTKLTALNNTVTTSSLTGNKDSIYSLATNPSGTVVISGSTEKVLRVFDPRACQKLMKLRGHTDNVKAVVVNRDGTQCISASSDGTIKLWSIGQQCCISSLKCHSESVWALQVDSNFSCVYSGGRDKRIFRTAINDFKTAQLMFIEDAPVQRLQLIDSESRFIWTATWNSSIKRWPLPSDAQISVEIKSDQYGETIPSIHEPDLTIPGAASIRQHVVLNDKRHIVTKDTDDNVAMWDVLKGRKVCDHGKRPMEEVIKDHFKKVFVPSWFTVDLKSGMLQITLDESDFFSAWVSAKDAGFPNIQNDTKINYGGMLLRALFEHWSRSFSDVDEESPTHRFNSVPGHTPLILCESTGRPIFRLMIRDAAHETESQMLSDFVPPWVLDVVERNQLPKFNKMPFFLLPHLSLGIKTPKKDRLSATEMLQVRKVMEHVYEKILNVNDASYSENGIPSAAQMLSPSLQANIEERVELYCQDQKLDPEMDLRTVKHFIWKQGGDLMLYYKPIR.

8 WD repeats span residues 23 to 78 (MHRS…RDLH), 84 to 120 (HHTD…CMST), 123 to 162 (THRD…KLTA), 174 to 213 (GNKD…KLMK), 216 to 255 (GHTD…CISS), 258 to 297 (CHSE…TAQL), 300 to 341 (IEDA…ISVE), and 362 to 401 (PGAA…KVCD).

It belongs to the WD repeat WDR48 family.

In terms of biological role, regulator of deubiquitinating complexes. Activates deubiquitination by increasing the catalytic turnover without increasing the affinity of deubiquitinating enzymes for the substrate. This is WD repeat-containing protein 48 homolog from Brugia malayi (Filarial nematode worm).